Consider the following 911-residue polypeptide: DNA ligase 4 (911 aa).

12 residues coordinate ATP: Glu-271, Thr-272, Lys-273, Leu-274, Arg-278, Glu-331, Lys-345, Phe-367, Glu-427, Lys-432, Lys-449, and Lys-451. Lys-273 functions as the N6-AMP-lysine intermediate in the catalytic mechanism. Glu-331 is a binding site for Mg(2+). Glu-427 contributes to the Mg(2+) binding site. Positions 610–620 (LASKHFYVGGD) are required for catalytic activity. BRCT domains follow at residues 654–743 (KISN…PHFM) and 808–911 (SPLS…QYLI).

The protein belongs to the ATP-dependent DNA ligase family. Interacts with XRCC4; the LIG4-XRCC4 subcomplex has a 1:2 stoichiometry and XRCC4 is required for LIG4 stability. Component of the core long-range non-homologous end joining (NHEJ) complex (also named DNA-PK complex) composed of PRKDC, LIG4, XRCC4, XRCC6/Ku70, XRCC5/Ku86 and NHEJ1/XLF. Additional component of the NHEJ complex includes PAXX. Following autophosphorylation, PRKDC dissociates from DNA, leading to formation of the short-range NHEJ complex, composed of LIG4, XRCC4, XRCC6/Ku70, XRCC5/Ku86 and NHEJ1/XLF. Interacts with DCLRE1C; the interaction is direct. Interacts with APLF. Mg(2+) serves as cofactor.

It is found in the nucleus. It carries out the reaction ATP + (deoxyribonucleotide)n-3'-hydroxyl + 5'-phospho-(deoxyribonucleotide)m = (deoxyribonucleotide)n+m + AMP + diphosphate.. Functionally, DNA ligase involved in DNA non-homologous end joining (NHEJ); required for double-strand break (DSB) repair and V(D)J recombination. Catalyzes the NHEJ ligation step of the broken DNA during DSB repair by resealing the DNA breaks after the gap filling is completed. Joins single-strand breaks in a double-stranded polydeoxynucleotide in an ATP-dependent reaction. LIG4 is mechanistically flexible: it can ligate nicks as well as compatible DNA overhangs alone, while in the presence of XRCC4, it can ligate ends with 2-nucleotides (nt) microhomology and 1-nt gaps. Forms a subcomplex with XRCC4; the LIG4-XRCC4 subcomplex is responsible for the NHEJ ligation step and XRCC4 enhances the joining activity of LIG4. Binding of the LIG4-XRCC4 complex to DNA ends is dependent on the assembly of the DNA-dependent protein kinase complex DNA-PK to these DNA ends. LIG4 regulates nuclear localization of XRCC4. This chain is DNA ligase 4, found in Pongo abelii (Sumatran orangutan).